A 317-amino-acid polypeptide reads, in one-letter code: Acetyl-coenzyme A carboxylase carboxyl transferase subunit alpha (317 aa).

In terms of domain architecture, CoA carboxyltransferase C-terminal spans 39-293; the sequence is RLETKAREAL…GDAIADALSQ (255 aa).

Belongs to the AccA family. In terms of assembly, acetyl-CoA carboxylase is a heterohexamer composed of biotin carboxyl carrier protein (AccB), biotin carboxylase (AccC) and two subunits each of ACCase subunit alpha (AccA) and ACCase subunit beta (AccD).

Its subcellular location is the cytoplasm. It catalyses the reaction N(6)-carboxybiotinyl-L-lysyl-[protein] + acetyl-CoA = N(6)-biotinyl-L-lysyl-[protein] + malonyl-CoA. It functions in the pathway lipid metabolism; malonyl-CoA biosynthesis; malonyl-CoA from acetyl-CoA: step 1/1. Functionally, component of the acetyl coenzyme A carboxylase (ACC) complex. First, biotin carboxylase catalyzes the carboxylation of biotin on its carrier protein (BCCP) and then the CO(2) group is transferred by the carboxyltransferase to acetyl-CoA to form malonyl-CoA. The sequence is that of Acetyl-coenzyme A carboxylase carboxyl transferase subunit alpha from Xanthobacter autotrophicus (strain ATCC BAA-1158 / Py2).